A 389-amino-acid polypeptide reads, in one-letter code: S-adenosylmethionine synthase (389 aa).

H15 contributes to the ATP binding site. D17 contacts Mg(2+). Position 43 (E43) interacts with K(+). 2 residues coordinate L-methionine: E56 and Q99. Positions 99–109 are flexible loop; it reads QSPDIAQGVNE. ATP is bound by residues 166-168, 234-235, D243, 249-250, A266, and K270; these read DAK, RF, and RK. D243 serves as a coordination point for L-methionine. K274 is an L-methionine binding site.

It belongs to the AdoMet synthase family. As to quaternary structure, homotetramer; dimer of dimers. Mg(2+) serves as cofactor. K(+) is required as a cofactor.

It is found in the cytoplasm. It carries out the reaction L-methionine + ATP + H2O = S-adenosyl-L-methionine + phosphate + diphosphate. The protein operates within amino-acid biosynthesis; S-adenosyl-L-methionine biosynthesis; S-adenosyl-L-methionine from L-methionine: step 1/1. In terms of biological role, catalyzes the formation of S-adenosylmethionine (AdoMet) from methionine and ATP. The overall synthetic reaction is composed of two sequential steps, AdoMet formation and the subsequent tripolyphosphate hydrolysis which occurs prior to release of AdoMet from the enzyme. This chain is S-adenosylmethionine synthase, found in Laribacter hongkongensis (strain HLHK9).